We begin with the raw amino-acid sequence, 940 residues long: Isoleucine--tRNA ligase (940 aa).

Positions 58-68 (PYANGSIHIGH) match the 'HIGH' region motif. E564 is an L-isoleucyl-5'-AMP binding site. Positions 605–609 (KMSKS) match the 'KMSKS' region motif. K608 contacts ATP. Residues C903, C906, C923, and C926 each coordinate Zn(2+).

Belongs to the class-I aminoacyl-tRNA synthetase family. IleS type 1 subfamily. Monomer. It depends on Zn(2+) as a cofactor.

It localises to the cytoplasm. The enzyme catalyses tRNA(Ile) + L-isoleucine + ATP = L-isoleucyl-tRNA(Ile) + AMP + diphosphate. In terms of biological role, catalyzes the attachment of isoleucine to tRNA(Ile). As IleRS can inadvertently accommodate and process structurally similar amino acids such as valine, to avoid such errors it has two additional distinct tRNA(Ile)-dependent editing activities. One activity is designated as 'pretransfer' editing and involves the hydrolysis of activated Val-AMP. The other activity is designated 'posttransfer' editing and involves deacylation of mischarged Val-tRNA(Ile). The polypeptide is Isoleucine--tRNA ligase (Shewanella baltica (strain OS155 / ATCC BAA-1091)).